The primary structure comprises 178 residues: Large ribosomal subunit protein uL6 (178 aa).

The protein belongs to the universal ribosomal protein uL6 family. Part of the 50S ribosomal subunit.

Its function is as follows. This protein binds to the 23S rRNA, and is important in its secondary structure. It is located near the subunit interface in the base of the L7/L12 stalk, and near the tRNA binding site of the peptidyltransferase center. The sequence is that of Large ribosomal subunit protein uL6 from Listeria monocytogenes serotype 4a (strain HCC23).